We begin with the raw amino-acid sequence, 164 residues long: Lipoprotein signal peptidase (164 aa).

3 helical membrane-spanning segments follow: residues 12–32 (WLWL…LILQ), 70–90 (WFFA…MYRS), and 102–122 (ALII…GFVV). Catalysis depends on residues D123 and D141. A helical membrane pass occupies residues 137 to 157 (FNLADTAICVGAALIVLEGFL).

This sequence belongs to the peptidase A8 family.

Its subcellular location is the cell inner membrane. It catalyses the reaction Release of signal peptides from bacterial membrane prolipoproteins. Hydrolyzes -Xaa-Yaa-Zaa-|-(S,diacylglyceryl)Cys-, in which Xaa is hydrophobic (preferably Leu), and Yaa (Ala or Ser) and Zaa (Gly or Ala) have small, neutral side chains.. The protein operates within protein modification; lipoprotein biosynthesis (signal peptide cleavage). Its function is as follows. This protein specifically catalyzes the removal of signal peptides from prolipoproteins. The protein is Lipoprotein signal peptidase of Shigella flexneri.